Consider the following 198-residue polypeptide: Inner membrane-spanning protein YciB (198 aa).

5 helical membrane passes run 36 to 56, 67 to 87, 90 to 110, 135 to 155, and 162 to 182; these read IYSA…ALFI, LTLI…SETF, WKAP…HFIG, IAWI…AFTF, and FKVF…GIYL.

This sequence belongs to the YciB family.

The protein resides in the cell inner membrane. Plays a role in cell envelope biogenesis, maintenance of cell envelope integrity and membrane homeostasis. The chain is Inner membrane-spanning protein YciB from Pseudomonas fluorescens (strain Pf0-1).